The primary structure comprises 296 residues: MTQSTASAHKTPVVTRTAEEIQALRPQLGRLALVPTMGALHTGHRSLIAQAREHAESVAVSIFVNPLQFGPNEDYDRYPRTFDHDLRVCAEEGVDVVFAPTVDVMYPDADGDSLGQIVTVDPGSMGRVLEGEFRPGFFHGVLTVVNKLFNLIRPDVAVFGQKDAQQLAVVRRMVRDLCLPVTIVAAPTVRDPDGLATSSRNVYLSAEERASALALSKALFAGADAASSGPAAVLAAARAILSEAARATPPVSVDYLALVDPTTFTEVGDDYRGDAVLAVAAWVGETRLIDNVPLTL.

37–44 (MGALHTGH) is a binding site for ATP. Residue His-44 is the Proton donor of the active site. Gln-68 is a (R)-pantoate binding site. A beta-alanine-binding site is contributed by Gln-68. An ATP-binding site is contributed by 160 to 163 (GQKD). Gln-166 lines the (R)-pantoate pocket. ATP is bound by residues Val-189 and 197 to 200 (TSSR).

It belongs to the pantothenate synthetase family. Homodimer.

The protein localises to the cytoplasm. It carries out the reaction (R)-pantoate + beta-alanine + ATP = (R)-pantothenate + AMP + diphosphate + H(+). Its pathway is cofactor biosynthesis; (R)-pantothenate biosynthesis; (R)-pantothenate from (R)-pantoate and beta-alanine: step 1/1. Functionally, catalyzes the condensation of pantoate with beta-alanine in an ATP-dependent reaction via a pantoyl-adenylate intermediate. This is Pantothenate synthetase from Thermobifida fusca (strain YX).